Here is a 200-residue protein sequence, read N- to C-terminus: uncharacterized protein (200 aa).

Low complexity-rich tracts occupy residues 1 to 13 and 28 to 44; these read MTSA…AAES and PSPA…AGPR. 2 disordered regions span residues 1 to 116 and 137 to 200; these read MTSA…GGPG and LPRD…SSFF. Residues 88 to 102 show a composition bias toward basic residues; it reads RCGRPRRRDPRRRRT. Residues 189–200 are compositionally biased toward low complexity; the sequence is PSSSSGLLSSFF.

This is an uncharacterized protein from Homo sapiens (Human).